The sequence spans 59 residues: Large ribosomal subunit protein uL30 (59 aa).

The protein belongs to the universal ribosomal protein uL30 family. As to quaternary structure, part of the 50S ribosomal subunit.

This Sodalis glossinidius (strain morsitans) protein is Large ribosomal subunit protein uL30.